Consider the following 734-residue polypeptide: Protein arginine N-methyltransferase 5 (734 aa).

Positions 1 to 16 are enriched in polar residues; that stretch reads MSNRTYADNLFPQQVA. The tract at residues 1–39 is disordered; it reads MSNRTYADNLFPQQVAEQHEEQMSSGSSPKSNSPSRSIS. Residues 24–39 are compositionally biased toward low complexity; sequence SSGSSPKSNSPSRSIS. The TIM barrel stretch occupies residues 42–329; sequence EAANSRIHIG…EYSQALRHAV (288 aa). In terms of domain architecture, SAM-dependent MTase PRMT-type spans 360–706; it reads LQAPLQPLSE…VDNTGVWYEW (347 aa). Y376 lines the S-adenosyl-L-methionine pocket. F379 is a binding site for a protein. S-adenosyl-L-methionine is bound by residues 385-386, E450, and 477-478; these read KY and DM. The a protein site is built by E499 and E508. Residues E499 and E508 each act as proton donor/acceptor in the active site. The beta barrel stretch occupies residues 529 to 734; sequence PQKYTSYVKP…PNGESYYMRM (206 aa). Residues 541–589 form a dimerization region; sequence STHIHQTIKAQSIPYLSRAIPSHGRGEPELDEDEMWIQKYPQGHVRNNM.

It belongs to the class I-like SAM-binding methyltransferase superfamily. Protein arginine N-methyltransferase family. As to quaternary structure, homodimer. Interacts with cep-1 (via C-terminus domain); does not methylate cep-1. Interacts with cbp-1 (via N-terminus domain and HAT domain); the interaction results in methylation of cbp-1. Component of a complex that contains cep-1 and cbp-1. May interact with pid-2, pid-4 and pid-5.

The protein resides in the nucleus. The catalysed reaction is L-arginyl-[protein] + 2 S-adenosyl-L-methionine = N(omega),N(omega)'-dimethyl-L-arginyl-[protein] + 2 S-adenosyl-L-homocysteine + 2 H(+). In terms of biological role, catalyzes the symmetrical dimethylation of arginine residues in targets such as small nuclear ribonucleoproteins, histone H2A/H4 and cbp-1. Dimethylation occurs in a distributive manner where the protein is released after the addition of the first methyl group prior to rebinding for the addition of the second methyl group. Plays a role in the negative regulation of DNA damage-induced apoptosis. By methylating cbp-1, may prevent apoptosis by repressing the capacity of cbp-1 to enhance cep-1 dependent transcription activation of the programmed cell death activator egl-1. Plays a role in heat and oxidative stress resistance. The polypeptide is Protein arginine N-methyltransferase 5 (Caenorhabditis elegans).